The chain runs to 115 residues: Alpha-endosulfine (115 aa).

Over residues 1–10 (MSSENLSDTQ) the composition is skewed to polar residues. A disordered region spans residues 1 to 27 (MSSENLSDTQMEYEDEKQDSQEKNANL). Phosphoserine; by GWL is present on serine 65. The tract at residues 77–115 (NKQLPVAGPDKNLVTGDHIPTPQDLPQRRSSLVTSKLAG) is disordered. Residues 104-115 (RRSSLVTSKLAG) show a composition bias toward polar residues.

The protein belongs to the endosulfine family. Post-translationally, phosphorylation at Ser-65 by gwl during mitosis is essential for interaction with ppp2r2d (PR55-delta) and subsequent inactivation of PP2A.

Its subcellular location is the cytoplasm. Functionally, protein phosphatase inhibitor that specifically inhibits protein phosphatase 2A (PP2A) during mitosis. When phosphorylated at Ser-67 during mitosis, specifically interacts with ppp2r2d (PR55-delta) and inhibits its activity, leading to inactivation of PP2A, an essential condition to keep cyclin-B1-CDK1 activity high during M phase. In Salmo salar (Atlantic salmon), this protein is Alpha-endosulfine (ensa).